The following is a 94-amino-acid chain: C-C motif chemokine 17 (94 aa).

The signal sequence occupies residues 1–23 (MAPLKMLALVTLLLGASLQHIHA). 2 disulfides stabilise this stretch: cysteine 33–cysteine 57 and cysteine 34–cysteine 73.

Belongs to the intercrine beta (chemokine CC) family. In terms of tissue distribution, constitutively expressed in thymus. Detected at lower levels in the lung, colon and small intestine. Expressed in stimulated peripheral blood mononuclear cells, but not in resting cells.

It is found in the secreted. Chemokine, which displays chemotactic activity for T lymphocytes, preferentially Th2 cells, but not monocytes or granulocytes. Therefore plays an important role in a wide range of inflammatory and immunological processes. Acts by binding to CCR4 at T-cell surface. Mediates GM-CSF/CSF2-driven pain and inflammation. In the brain, required to maintain the typical, highly branched morphology of hippocampal microglia under homeostatic conditions. May be important for the appropriate adaptation of microglial morphology and synaptic plasticity to acute lipopolysaccharide (LPS)-induced neuroinflammation. Plays a role in wound healing, mainly by inducing fibroblast migration into the wound. In Homo sapiens (Human), this protein is C-C motif chemokine 17 (CCL17).